The following is a 603-amino-acid chain: MRRKEKRLLQAVALVLAALVLLPNVGLWALYRERQPDGTPGGSGAAVAPAAGQGSHSRQKKTFFLGDGQKLKDWHDKEAIRRDAQRVGNGEQGRPYPMTDAERVDQAYRENGFNIYVSDKISLNRSLPDIRHPNCNSKRYLETLPNTSIIIPFHNEGWSSLLRTVHSVLNRSPPELVAEIVLVDDFSDREHLKKPLEDYMALFPSVRILRTKKREGLIRTRMLGASVATGDVITFLDSHCEANVNWLPPLLDRIARNRKTIVCPMIDVIDHDDFRYETQAGDAMRGAFDWEMYYKRIPIPPELQKADPSDPFESPVMAGGLFAVDRKWFWELGGYDPGLEIWGGEQYEISFKVWMCGGRMEDIPCSRVGHIYRKYVPYKVPAGVSLARNLKRVAEVWMDEYAEYIYQRRPEYRHLSAGDVAVQKKLRSSLNCKSFKWFMTKIAWDLPKFYPPVEPPAAAWGEIRNVGTGLCADTKHGALGSPLRLEGCVRGRGEAAWNNMQVFTFTWREDIRPGDPQHTKKFCFDAISHTSPVTLYDCHSMKGNQLWKYRKDKTLYHPVSGSCMDCSESDHRIFMNTCNPSSLTQQWLFEHTNSTVLEKFNRN.

At 1-11 the chain is on the cytoplasmic side; it reads MRRKEKRLLQA. A helical; Signal-anchor for type II membrane protein transmembrane segment spans residues 12-31; the sequence is VALVLAALVLLPNVGLWALY. Residues 32-603 are Lumenal-facing; sequence RERQPDGTPG…STVLEKFNRN (572 aa). Residues 38–59 are disordered; it reads GTPGGSGAAVAPAAGQGSHSRQ. Positions 45 to 55 are enriched in low complexity; the sequence is AAVAPAAGQGS. N124 and N146 each carry an N-linked (GlcNAc...) asparagine glycan. 5 disulfides stabilise this stretch: C135–C365, C356–C432, C471–C488, C523–C538, and C563–C578. The interval 144–253 is catalytic subdomain A; it reads LPNTSIIIPF…VNWLPPLLDR (110 aa). The substrate site is built by H154, E156, D185, and R214. Position 237 (D237) interacts with Mn(2+). S238 contributes to the substrate binding site. H239 is a Mn(2+) binding site. Positions 311–373 are catalytic subdomain B; the sequence is PFESPVMAGG…PCSRVGHIYR (63 aa). Position 342 (W342) interacts with substrate. H370 serves as a coordination point for Mn(2+). Residues R373 and Y378 each coordinate substrate. Positions 373–384 are flexible loop; the sequence is RKYVPYKVPAGV. Residues 458-590 enclose the Ricin B-type lectin domain; sequence AAWGEIRNVG…SSLTQQWLFE (133 aa). N593 is a glycosylation site (N-linked (GlcNAc...) asparagine).

This sequence belongs to the glycosyltransferase 2 family. GalNAc-T subfamily. Mn(2+) is required as a cofactor. Widely expressed. Expressed at high level in small intestine, and at intermediate levels in stomach, pancreas, ovary, thyroid gland and spleen. Weakly expressed in other tissues.

It localises to the golgi apparatus membrane. It carries out the reaction L-seryl-[protein] + UDP-N-acetyl-alpha-D-galactosamine = a 3-O-[N-acetyl-alpha-D-galactosaminyl]-L-seryl-[protein] + UDP + H(+). It catalyses the reaction L-threonyl-[protein] + UDP-N-acetyl-alpha-D-galactosamine = a 3-O-[N-acetyl-alpha-D-galactosaminyl]-L-threonyl-[protein] + UDP + H(+). The protein operates within protein modification; protein glycosylation. Its function is as follows. Catalyzes the initial reaction in O-linked oligosaccharide biosynthesis, the transfer of an N-acetyl-D-galactosamine residue to a serine or threonine residue on the protein receptor. Has activity toward Muc5Ac and EA2 peptide substrates. This Homo sapiens (Human) protein is Polypeptide N-acetylgalactosaminyltransferase 10 (GALNT10).